Here is a 130-residue protein sequence, read N- to C-terminus: D-ribose pyranase (130 aa).

H20 acts as the Proton donor in catalysis. Substrate-binding positions include D28, H97, and 119–121; that span reads YAN.

Belongs to the RbsD / FucU family. RbsD subfamily. Homodecamer.

It localises to the cytoplasm. The enzyme catalyses beta-D-ribopyranose = beta-D-ribofuranose. The protein operates within carbohydrate metabolism; D-ribose degradation; D-ribose 5-phosphate from beta-D-ribopyranose: step 1/2. Catalyzes the interconversion of beta-pyran and beta-furan forms of D-ribose. In Paracidovorax citrulli (strain AAC00-1) (Acidovorax citrulli), this protein is D-ribose pyranase.